The primary structure comprises 141 residues: Putative ankyrin repeat protein FPV223 (141 aa).

ANK repeat units follow at residues 21-50, 54-83, 85-114, and 118-140; these read SGRT…DVFK, CMCT…YIVK, RNKL…NENS, and DGLT…MFVI.

This Vertebrata (FPV) protein is Putative ankyrin repeat protein FPV223.